The chain runs to 4574 residues: E3 ubiquitin-protein ligase MYCBP2 (4574 aa).

Disordered stretches follow at residues 92–115 (RGKK…VKTR) and 599–620 (SASK…PYKP). RCC1 repeat units follow at residues 591 to 646 (DGSV…IVTK), 690 to 746 (SGEV…MMCQ), 943 to 993 (NGDV…VLLM), and 995 to 1051 (GQVF…LRID). Basic residues predominate over residues 611-620 (SRRQPKPYKP). The cysteines at positions 1733 and 1850 are disulfide-linked. Disordered stretches follow at residues 1976 to 1998 (APPT…EQGL) and 2313 to 2332 (LQRL…LTFG). Polar residues-rich tracts occupy residues 1981-1998 (NPNQ…EQGL) and 2317-2328 (PGTSSNSATGTD). The stretch at 2336 to 2417 (APKLEATYEP…IHVTIDGIEI (82 aa)) is one Filamin repeat. Disordered regions lie at residues 2613 to 2824 (GFDY…PSPH), 2845 to 2922 (SNDE…KQAM), 3085 to 3116 (SPGS…KAEV), 3345 to 3365 (PGSN…TDSD), and 3505 to 3526 (FETE…EQEK). Basic and acidic residues-rich tracts occupy residues 2639–2663 (HRQE…KSKN) and 2678–2688 (DTGKLRSDSHS). The span at 2716–2729 (NPGSRSSSPKQKTF) shows a compositional bias: polar residues. Positions 2730-2745 (TSGRSSPSSTSSPRSS) are enriched in low complexity. Basic and acidic residues-rich tracts occupy residues 2761–2772 (VHLDPPRERSKS), 2854–2864 (SELHNAEEGSS), and 2874–2883 (PVKEELESRS). Composition is skewed to basic residues over residues 2887–2900 (VSRK…RPKK) and 3102–3111 (KKTKKEKKKK). Positions 3515–3526 (NKGNKENLEQEK) are enriched in basic and acidic residues. Positions 3617-3795 (FNISVQSGYE…SVAQQKNCEA (179 aa)) constitute a DOC domain. Positions 3815-3841 (GDAEPTPEQEEKNLLSSPEGEDKAPSD) are disordered. Zn(2+) contacts are provided by Cys4324, Cys4327, Cys4342, His4344, His4347, Cys4350, Cys4371, Cys4374, Cys4440, and Cys4443. An RING-type; atypical zinc finger spans residues 4324–4375 (CMICFTEALSAAPAIQLDCSHVFHLQCTRRVLENRWLGPRITFGFMSCPICK). The segment at 4435-4572 (YAYYVCFKCK…LGCGVCRNAH (138 aa)) is tandem cysteine domain. Cys4454 is an active-site residue. Zn(2+) is bound by residues Cys4471, Cys4474, Cys4483, His4486, Cys4495, Cys4498, and Cys4499. Cys4506 is a catalytic residue. 7 residues coordinate Zn(2+): Cys4513, Cys4516, Cys4534, Cys4548, His4554, Cys4565, and Cys4568.

The protein belongs to the RING-Cys relay (RCR) family. As to expression, widely expressed when the visual system begins developing. In the eye, expressed in all cells, including retinal ganglion cells, with no obvious gradient.

Its subcellular location is the nucleus. The protein localises to the cell projection. It localises to the axon. It is found in the cytoplasm. The protein resides in the cytoskeleton. It catalyses the reaction [E2 ubiquitin-conjugating enzyme]-S-ubiquitinyl-L-cysteine + [acceptor protein]-L-threonine = [E2 ubiquitin-conjugating enzyme]-L-cysteine + [acceptor protein]-3-O-ubiquitinyl-L-threonine.. The protein operates within protein modification; protein ubiquitination. In terms of biological role, atypical E3 ubiquitin-protein ligase which specifically mediates ubiquitination of threonine and serine residues on target proteins, instead of ubiquitinating lysine residues. Shows esterification activity towards both threonine and serine, with a preference for threonine, and acts via two essential catalytic cysteine residues that relay ubiquitin to its substrate via thioester intermediates. Interacts with the E2 enzymes UBE2D1, UBE2D3, UBE2E1 and UBE2L3. Plays a key role in neural development, probably by mediating ubiquitination of threonine residues on target proteins. Involved in different processes such as regulation of neurite outgrowth, synaptic growth, synaptogenesis and axon degeneration. Required in the visual system for correct fasciculation, targeting and mapping of retinal axons. Acts as a regulator of pteridine synthesis. May play a role in the regulation of the circadian clock gene expression. This Danio rerio (Zebrafish) protein is E3 ubiquitin-protein ligase MYCBP2.